The chain runs to 520 residues: Putative lipase ATG15 (520 aa).

The Cytoplasmic portion of the chain corresponds to 1-14 (MLHKSPSRKRFASP). The chain crosses the membrane as a helical; Signal-anchor for type II membrane protein span at residues 15–35 (LHLGCILTLTVLCLIAYYFAL). The Lumenal portion of the chain corresponds to 36–520 (PDYLSVGKSS…WLGFCTKYEL (485 aa)). N-linked (GlcNAc...) asparagine glycosylation is found at N173, N202, and N208. S332 functions as the Charge relay system in the catalytic mechanism.

The protein belongs to the AB hydrolase superfamily. Lipase family. As to quaternary structure, binds to both phosphatidylinositol (PI) and phosphatidylinositol 3,5-bisphosphate (PIP2). Post-translationally, glycosylated.

Its subcellular location is the endosome. The protein resides in the multivesicular body membrane. The protein localises to the prevacuolar compartment membrane. The enzyme catalyses a triacylglycerol + H2O = a diacylglycerol + a fatty acid + H(+). In terms of biological role, lipase which is essential for lysis of subvacuolar cytoplasm to vacuole targeted bodies and intravacuolar autophagic bodies. Involved in the lysis of intravacuolar multivesicular body (MVB) vesicles. The intravacuolar membrane disintegration by ATG15 is critical to life span extension. This Saccharomyces cerevisiae (strain ATCC 204508 / S288c) (Baker's yeast) protein is Putative lipase ATG15 (ATG15).